Here is a 467-residue protein sequence, read N- to C-terminus: tRNA dimethylallyltransferase (467 aa).

The transit peptide at 1-47 (MAAAAAARAVPVSSGFRGLRRTLPLVVILGATGTGKSTLALQLGQRL) directs the protein to the mitochondrion. Residue 32–37 (TGTGKS) participates in dimethylallyl diphosphate binding. Interaction with substrate tRNA stretches follow at residues 55 to 58 (DSMQ) and 183 to 187 (RKVAR). Residues 221–230 (FPNPCILWLH) are core aggregation region. The interval 233 to 255 (QAVLDERLDKRVDDMLAAGLLEE) is interaction with isopentenylpyrophosphate transferase. Interaction with substrate tRNA regions lie at residues 281–283 (QSI) and 313–331 (ALKQ…WVKN). Residues 395–425 (HMCDLCDRIIIGDREWAAHLKSKSHLHQLKK) form a Matrin-type zinc finger. The interval 432-467 (DAVSATGSQSNSPDCDPERIEGESSGQHNQELKASV) is disordered. A phosphoserine mark is found at Ser-443 and Ser-455.

Belongs to the IPP transferase family.

The protein localises to the mitochondrion. Its subcellular location is the cytoplasm. It localises to the nucleus. The enzyme catalyses adenosine(37) in tRNA + dimethylallyl diphosphate = N(6)-dimethylallyladenosine(37) in tRNA + diphosphate. In terms of biological role, catalyzes the transfer of a dimethylallyl group onto the adenine at position 37 of both cytosolic and mitochondrial tRNAs, leading to the formation of N6-(dimethylallyl)adenosine (i6A37). Mediates modification of a limited subset of tRNAs: tRNA(Ser)(AGA), tRNA(Ser)(CGA), tRNA(Ser)(UGA), as well as partial modification of the selenocysteine tRNA(Ser)(UCA). TRIT1 is therefore required for selenoprotein expression. The polypeptide is tRNA dimethylallyltransferase (Trit1) (Mus musculus (Mouse)).